A 189-amino-acid chain; its full sequence is Thymidine kinase (189 aa).

ATP is bound by residues 9–16 (GTMNSGKT) and 85–88 (DESQ). E86 acts as the Proton acceptor in catalysis. The Zn(2+) site is built by C143, C146, C180, and H183.

Belongs to the thymidine kinase family. Homotetramer.

The protein resides in the cytoplasm. It carries out the reaction thymidine + ATP = dTMP + ADP + H(+). The chain is Thymidine kinase from Streptococcus pyogenes serotype M3 (strain ATCC BAA-595 / MGAS315).